The chain runs to 1143 residues: Disease resistance protein Piks-1 (1143 aa).

The interval 1–190 (MEAAAMAVTA…PLRIMGGEMQ (190 aa)) is structured coiled coil (CC) domain. The 70-residue stretch at 189 to 258 (MQKIVFKIPM…KVGPAMFLEV (70 aa)) folds into the HMA domain. The tract at residues 191–264 (KIVFKIPMVD…FLEVSQAKED (74 aa)) is HMA-like domain. Residues 282-570 (HEVKTICILG…WIAEGFVSEE (289 aa)) form the NB-ARC domain. LRR repeat units lie at residues 681–706 (FKRL…ICEQ), 708–731 (SLRV…MRKL), 732–754 (KHLE…IGEL), 756–777 (HLRI…IREL), 778–800 (QHLH…VGKL), 802–823 (NLKI…IGEL), 824–848 (NHLQ…QISQ), 945–968 (MPNL…INGT), 979–1002 (DSRV…EFKF), and 1004–1027 (AGPA…VFRC).

The protein belongs to the disease resistance NB-LRR family. As to quaternary structure, interacts with AVR-Pik through its N-terminal part containing the HMA-like domain.

Disease resistance (R) protein that specifically recognizes the AVR-Pik effector avirulence protein from M.oryzae. Resistance proteins guard the plant against pathogens that contain an appropriate avirulence protein via an indirect interaction with this avirulence protein. That triggers a defense system including the hypersensitive response, which restricts the pathogen growth. The polypeptide is Disease resistance protein Piks-1 (Oryza sativa subsp. japonica (Rice)).